Here is a 264-residue protein sequence, read N- to C-terminus: 3-methyl-2-oxobutanoate hydroxymethyltransferase (264 aa).

The Mg(2+) site is built by aspartate 45 and aspartate 84. Residues 45-46 (DS), aspartate 84, and lysine 112 contribute to the 3-methyl-2-oxobutanoate site. Glutamate 114 is a binding site for Mg(2+). The active-site Proton acceptor is glutamate 181.

It belongs to the PanB family. Homodecamer; pentamer of dimers. Mg(2+) is required as a cofactor.

The protein localises to the cytoplasm. It catalyses the reaction 3-methyl-2-oxobutanoate + (6R)-5,10-methylene-5,6,7,8-tetrahydrofolate + H2O = 2-dehydropantoate + (6S)-5,6,7,8-tetrahydrofolate. Its pathway is cofactor biosynthesis; (R)-pantothenate biosynthesis; (R)-pantoate from 3-methyl-2-oxobutanoate: step 1/2. Its function is as follows. Catalyzes the reversible reaction in which hydroxymethyl group from 5,10-methylenetetrahydrofolate is transferred onto alpha-ketoisovalerate to form ketopantoate. In Shewanella putrefaciens (strain CN-32 / ATCC BAA-453), this protein is 3-methyl-2-oxobutanoate hydroxymethyltransferase.